The following is a 1077-amino-acid chain: Disheveled-associated activator of morphogenesis 1 (1077 aa).

S34 is subject to Phosphoserine. The 376-residue stretch at 45–420 folds into the GBD/FH3 domain; it reads LPMPPVEELD…QIVIQNDKGQ (376 aa). A coiled-coil region spans residues 437-526; it reads RMLVNENEVK…ELNRRAVCAA (90 aa). Disordered stretches follow at residues 457-478 and 526-596; these read KEHNELQQKLEKKERECDAKTQ and AVPG…PVSL. Residues 528–599 form the FH1 domain; it reads PGGPSPGAPG…PGAPVSLTLK (72 aa). Composition is skewed to pro residues over residues 530–539 and 549–592; these read GPSPGAPGGP and LPPP…PPGA. Residues 600–1008 form the FH2 domain; sequence KKNIPQPTNA…EERRARLEAQ (409 aa). Residues 693–702 are actin-binding; that stretch reads QNCNILLSRL. Over residues 1007–1026 the composition is skewed to basic and acidic residues; sequence AQLKEQRERERKVRKAKESS. 2 disordered regions span residues 1007-1033 and 1056-1077; these read AQLKEQRERERKVRKAKESSEESGEFD and RKRISNQVTDSSRERPITKLNF. Phosphoserine is present on residues S1026 and S1029. Residues 1026–1057 enclose the DAD domain; the sequence is SEESGEFDDLVSALRSGEVFDKDLSKLKRNRK. The span at 1066–1077 shows a compositional bias: basic and acidic residues; sequence SSRERPITKLNF.

The protein belongs to the formin homology family. Interacts with CIP4, FNBP1 and FNBP1L. Interacts with the SH3 domains of Abl, BTK, endophilin, spectrin and SRC. Binds specifically to GTP-bound CDC42 and RHOA. Interacts with INTU; INTU mediates the indirect interaction between DAAM1 and NPHP4. Interacts (via coiled coil domain) with KANK1 (via coiled coil domain). As to expression, in early embryogenesis, expressed in embryonic and extraembryonic ectoderm. In later stages of gastrulation, expressed also in somites and ribs and posterior vertebrae of developing skeletal system. During organogenesis, expressed in CNS, PNS, stomach, liver and limb bud.

The protein resides in the cytoplasm. It localises to the cytoskeleton. It is found in the cilium basal body. Functionally, binds to disheveled (Dvl) and Rho, and mediates Wnt-induced Dvl-Rho complex formation. May play a role as a scaffolding protein to recruit Rho-GDP and Rho-GEF, thereby enhancing Rho-GTP formation. Can direct nucleation and elongation of new actin filaments. Involved in building functional cilia. Involved in the organization of the subapical actin network in multiciliated epithelial cells. Together with DAAM2, required for myocardial maturation and sarcomere assembly. During cell division, may regulate RHOA activation that signals spindle orientation and chromosomal segregation. This is Disheveled-associated activator of morphogenesis 1 (Daam1) from Mus musculus (Mouse).